Here is a 209-residue protein sequence, read N- to C-terminus: NAD(P)H-quinone oxidoreductase subunit I (209 aa).

4Fe-4S ferredoxin-type domains follow at residues 55 to 84 (GRIH…VDYE) and 95 to 124 (NSYS…MTEE). The [4Fe-4S] cluster site is built by Cys64, Cys67, Cys70, Cys74, Cys104, Cys107, Cys110, and Cys114.

It belongs to the complex I 23 kDa subunit family. NDH-1 is composed of at least 11 different subunits. [4Fe-4S] cluster serves as cofactor.

The protein resides in the cell inner membrane. The enzyme catalyses a plastoquinone + NADH + (n+1) H(+)(in) = a plastoquinol + NAD(+) + n H(+)(out). It carries out the reaction a plastoquinone + NADPH + (n+1) H(+)(in) = a plastoquinol + NADP(+) + n H(+)(out). Functionally, NDH-1 shuttles electrons from an unknown electron donor, via FMN and iron-sulfur (Fe-S) centers, to quinones in the respiratory and/or the photosynthetic chain. The immediate electron acceptor for the enzyme in this species is believed to be plastoquinone. Couples the redox reaction to proton translocation, and thus conserves the redox energy in a proton gradient. This is NAD(P)H-quinone oxidoreductase subunit I from Gloeobacter violaceus (strain ATCC 29082 / PCC 7421).